The primary structure comprises 470 residues: UDP-N-acetylmuramoylalanine--D-glutamate ligase (470 aa).

121 to 127 (GTNGKST) contributes to the ATP binding site.

The protein belongs to the MurCDEF family.

The protein resides in the cytoplasm. It carries out the reaction UDP-N-acetyl-alpha-D-muramoyl-L-alanine + D-glutamate + ATP = UDP-N-acetyl-alpha-D-muramoyl-L-alanyl-D-glutamate + ADP + phosphate + H(+). It functions in the pathway cell wall biogenesis; peptidoglycan biosynthesis. Its function is as follows. Cell wall formation. Catalyzes the addition of glutamate to the nucleotide precursor UDP-N-acetylmuramoyl-L-alanine (UMA). This Rhizobium etli (strain ATCC 51251 / DSM 11541 / JCM 21823 / NBRC 15573 / CFN 42) protein is UDP-N-acetylmuramoylalanine--D-glutamate ligase.